Here is a 197-residue protein sequence, read N- to C-terminus: Small ribosomal subunit protein uS4 (197 aa).

An S4 RNA-binding domain is found at serine 88–asparagine 150.

This sequence belongs to the universal ribosomal protein uS4 family. As to quaternary structure, part of the 30S ribosomal subunit. Contacts protein S5. The interaction surface between S4 and S5 is involved in control of translational fidelity.

In terms of biological role, one of the primary rRNA binding proteins, it binds directly to 16S rRNA where it nucleates assembly of the body of the 30S subunit. Functionally, with S5 and S12 plays an important role in translational accuracy. The sequence is that of Small ribosomal subunit protein uS4 from Azobacteroides pseudotrichonymphae genomovar. CFP2.